Reading from the N-terminus, the 469-residue chain is Adenosylhomocysteinase (469 aa).

Substrate contacts are provided by T63, D139, and E164. T165–T167 is an NAD(+) binding site. The substrate site is built by K194 and D198. Residues N199, G228–G233, E251, N300, I321–H323, and N375 each bind NAD(+).

This sequence belongs to the adenosylhomocysteinase family. NAD(+) is required as a cofactor.

It is found in the cytoplasm. The enzyme catalyses S-adenosyl-L-homocysteine + H2O = L-homocysteine + adenosine. It functions in the pathway amino-acid biosynthesis; L-homocysteine biosynthesis; L-homocysteine from S-adenosyl-L-homocysteine: step 1/1. Its function is as follows. May play a key role in the regulation of the intracellular concentration of adenosylhomocysteine. The protein is Adenosylhomocysteinase of Pseudomonas fluorescens (strain SBW25).